The following is a 218-amino-acid chain: uncharacterized protein (218 aa).

Transmembrane regions (helical) follow at residues 14–34 and 175–195; these read CLLS…YFTS and LIIP…LALV.

It to H.pylori HP0270.

It is found in the cell membrane. This is an uncharacterized protein from Rickettsia prowazekii (strain Madrid E).